The primary structure comprises 324 residues: Porphobilinogen deaminase (324 aa).

C246 carries the S-(dipyrrolylmethanemethyl)cysteine modification. The segment at 261 to 279 (GQAPEEGGRAAASQAPAAL) is insert.

Belongs to the HMBS family. As to quaternary structure, monomer. It depends on dipyrromethane as a cofactor.

It carries out the reaction 4 porphobilinogen + H2O = hydroxymethylbilane + 4 NH4(+). Its pathway is porphyrin-containing compound metabolism; protoporphyrin-IX biosynthesis; coproporphyrinogen-III from 5-aminolevulinate: step 2/4. Tetrapolymerization of the monopyrrole PBG into the hydroxymethylbilane pre-uroporphyrinogen in several discrete steps. This Paenibacillus macerans (Bacillus macerans) protein is Porphobilinogen deaminase (hemC).